The primary structure comprises 394 residues: Ornithine aminotransferase 1 (394 aa).

Lys-252 carries the post-translational modification N6-(pyridoxal phosphate)lysine.

Belongs to the class-III pyridoxal-phosphate-dependent aminotransferase family. OAT subfamily. Requires pyridoxal 5'-phosphate as cofactor.

It localises to the cytoplasm. It catalyses the reaction a 2-oxocarboxylate + L-ornithine = L-glutamate 5-semialdehyde + an L-alpha-amino acid. Its pathway is amino-acid biosynthesis; L-proline biosynthesis; L-glutamate 5-semialdehyde from L-ornithine: step 1/1. In terms of biological role, catalyzes the interconversion of ornithine to glutamate semialdehyde. This Staphylococcus aureus (strain COL) protein is Ornithine aminotransferase 1.